Consider the following 204-residue polypeptide: Somatotropin (204 aa).

The N-terminal stretch at 1–17 is a signal peptide; the sequence is MDRVVLMLSVMSLGVSS. Glutamine 18 bears the Pyrrolidone carboxylic acid mark. A Zn(2+)-binding site is contributed by histidine 36. A disulfide bridge connects residues cysteine 69 and cysteine 177. Position 186 (glutamate 186) interacts with Zn(2+). Cysteine 194 and cysteine 202 form a disulfide bridge.

It belongs to the somatotropin/prolactin family.

The protein resides in the secreted. Functionally, growth hormone plays an important role in growth control and is involved in the regulation of several anabolic processes. Implicated as an osmoregulatory substance important for seawater adaptation. This is Somatotropin (gh) from Sparus aurata (Gilthead sea bream).